A 230-amino-acid polypeptide reads, in one-letter code: Putative N-acetylmannosamine-6-phosphate 2-epimerase (230 aa).

This sequence belongs to the NanE family.

It catalyses the reaction an N-acyl-D-glucosamine 6-phosphate = an N-acyl-D-mannosamine 6-phosphate. It participates in amino-sugar metabolism; N-acetylneuraminate degradation; D-fructose 6-phosphate from N-acetylneuraminate: step 3/5. In terms of biological role, converts N-acetylmannosamine-6-phosphate (ManNAc-6-P) to N-acetylglucosamine-6-phosphate (GlcNAc-6-P). This chain is Putative N-acetylmannosamine-6-phosphate 2-epimerase, found in Malacoplasma penetrans (strain HF-2) (Mycoplasma penetrans).